A 136-amino-acid polypeptide reads, in one-letter code: Protein PsiE homolog (136 aa).

4 consecutive transmembrane segments (helical) span residues 15-35, 58-78, 82-102, and 108-128; these read AMQA…VVFL, VEGL…VKYF, FHFP…RLII, and PLAV…LWLC.

Belongs to the PsiE family.

It localises to the cell inner membrane. The polypeptide is Protein PsiE homolog (Klebsiella pneumoniae subsp. pneumoniae (strain ATCC 700721 / MGH 78578)).